We begin with the raw amino-acid sequence, 139 residues long: MKKFIQDFKAFALKGNVVDMAVGVIIGGAFGKIVTSLVNDIMMPPISLLTGGVNFTDLKLVLSKAVVEGGEVVKPEVSWNYGNFIQTTVDFLILAFVIFLMIKAIMAAKRKEEEAPAAPAPTPPEIELLTEIRDLLKKQ.

2 consecutive transmembrane segments (helical) span residues 17–37 (VVDM…VTSL) and 88–108 (TVDF…IMAA).

The protein belongs to the MscL family. As to quaternary structure, homopentamer.

The protein localises to the cell inner membrane. In terms of biological role, channel that opens in response to stretch forces in the membrane lipid bilayer. May participate in the regulation of osmotic pressure changes within the cell. This chain is Large-conductance mechanosensitive channel, found in Porphyromonas gingivalis (strain ATCC 33277 / DSM 20709 / CIP 103683 / JCM 12257 / NCTC 11834 / 2561).